A 342-amino-acid chain; its full sequence is Phosphate acyltransferase (342 aa).

Belongs to the PlsX family. Homodimer. Probably interacts with PlsY.

The protein resides in the cytoplasm. The enzyme catalyses a fatty acyl-[ACP] + phosphate = an acyl phosphate + holo-[ACP]. The protein operates within lipid metabolism; phospholipid metabolism. Catalyzes the reversible formation of acyl-phosphate (acyl-PO(4)) from acyl-[acyl-carrier-protein] (acyl-ACP). This enzyme utilizes acyl-ACP as fatty acyl donor, but not acyl-CoA. This is Phosphate acyltransferase from Legionella pneumophila (strain Paris).